Here is an 89-residue protein sequence, read N- to C-terminus: Small ribosomal subunit protein uS19 (89 aa).

It belongs to the universal ribosomal protein uS19 family.

In terms of biological role, protein S19 forms a complex with S13 that binds strongly to the 16S ribosomal RNA. The polypeptide is Small ribosomal subunit protein uS19 (Phocaeicola vulgatus (strain ATCC 8482 / DSM 1447 / JCM 5826 / CCUG 4940 / NBRC 14291 / NCTC 11154) (Bacteroides vulgatus)).